A 322-amino-acid chain; its full sequence is MSIMLASCIALVSSLVLTVIFLPVLINFMHSHHEGQEIRDEGPKWHQKKSGTPTMGGTIFVIAAVISVIWVAAWQHSLNKVVWILVISLLGYGIIGFLDDGIKLYYKRNLGLRAWQKLALQIIIAVVIVLIASSDHFQFGLYIPFAGVVHSIALFTIFIIFWLVGFSNAVNLSDGLDGLATGLSIVAYGTYAYIAFKQKNFAVLAFCMSVIGGLIAFFIFNHKPAKIFMGDAGSLALGGGLATVSIMLNRPWSLLLIGIVFVCETASVILQVISFQTTGKRIFKMTPIHHHFEMLGWSEWKVDIVFWLVGLICSILYLAIWG.

10 helical membrane passes run 9–29 (IALV…INFM), 54–74 (TMGG…VAAW), 82–102 (VWIL…DDGI), 122–142 (IIIA…FGLY), 145–165 (FAGV…WLVG), 176–196 (LDGL…YIAF), 200–220 (NFAV…FFIF), 227–247 (IFMG…VSIM), 255–275 (LLIG…VISF), and 302–322 (VDIV…AIWG).

The protein belongs to the glycosyltransferase 4 family. MraY subfamily. Requires Mg(2+) as cofactor.

The protein resides in the cell membrane. The catalysed reaction is UDP-N-acetyl-alpha-D-muramoyl-L-alanyl-gamma-D-glutamyl-L-lysyl-D-alanyl-D-alanine + di-trans,octa-cis-undecaprenyl phosphate = Mur2Ac(oyl-L-Ala-gamma-D-Glu-L-Lys-D-Ala-D-Ala)-di-trans,octa-cis-undecaprenyl diphosphate + UMP. The protein operates within cell wall biogenesis; peptidoglycan biosynthesis. In terms of biological role, catalyzes the initial step of the lipid cycle reactions in the biosynthesis of the cell wall peptidoglycan: transfers peptidoglycan precursor phospho-MurNAc-pentapeptide from UDP-MurNAc-pentapeptide onto the lipid carrier undecaprenyl phosphate, yielding undecaprenyl-pyrophosphoryl-MurNAc-pentapeptide, known as lipid I. This Lactobacillus acidophilus (strain ATCC 700396 / NCK56 / N2 / NCFM) protein is Phospho-N-acetylmuramoyl-pentapeptide-transferase.